Here is a 293-residue protein sequence, read N- to C-terminus: Urease accessory protein UreD 2 (293 aa).

It belongs to the UreD family. As to quaternary structure, ureD, UreF and UreG form a complex that acts as a GTP-hydrolysis-dependent molecular chaperone, activating the urease apoprotein by helping to assemble the nickel containing metallocenter of UreC. The UreE protein probably delivers the nickel.

The protein resides in the cytoplasm. In terms of biological role, required for maturation of urease via the functional incorporation of the urease nickel metallocenter. This chain is Urease accessory protein UreD 2, found in Streptomyces griseus subsp. griseus (strain JCM 4626 / CBS 651.72 / NBRC 13350 / KCC S-0626 / ISP 5235).